The primary structure comprises 144 residues: Deoxyuridine 5'-triphosphate nucleotidohydrolase (144 aa).

The dUMP site is built by Ser-66, Gly-79, Asp-82, Tyr-85, Lys-90, Arg-134, Phe-139, and Gly-140.

This sequence belongs to the dUTPase family. As to quaternary structure, homotrimer. Mg(2+) serves as cofactor.

It catalyses the reaction dUTP + H2O = dUMP + diphosphate + H(+). It participates in pyrimidine metabolism; dUMP biosynthesis; dUMP from dCTP (dUTP route): step 2/2. In terms of biological role, involved in nucleotide metabolism via production of dUMP, the immediate precursor of thymidine nucleotides, and decreases the intracellular concentration of dUTP so that uracil cannot be incorporated into DNA. The protein is Deoxyuridine 5'-triphosphate nucleotidohydrolase (DUT1) of Candida glabrata (strain ATCC 2001 / BCRC 20586 / JCM 3761 / NBRC 0622 / NRRL Y-65 / CBS 138) (Yeast).